The primary structure comprises 276 residues: Large ribosomal subunit protein uL2 (276 aa).

The disordered stretch occupies residues 219–268; the sequence is TVRGSVMNPNDHPHGGGEGRQPVGRKSPMTPWGKPALGLKTRNKKAKSSK.

This sequence belongs to the universal ribosomal protein uL2 family. As to quaternary structure, part of the 50S ribosomal subunit. Forms a bridge to the 30S subunit in the 70S ribosome.

One of the primary rRNA binding proteins. Required for association of the 30S and 50S subunits to form the 70S ribosome, for tRNA binding and peptide bond formation. It has been suggested to have peptidyltransferase activity; this is somewhat controversial. Makes several contacts with the 16S rRNA in the 70S ribosome. The polypeptide is Large ribosomal subunit protein uL2 (Lactococcus lactis subsp. cremoris (strain MG1363)).